Here is a 614-residue protein sequence, read N- to C-terminus: UvrABC system protein C (614 aa).

Residues 12–89 (DKPGVYLFRG…IKEHRPRYNV (78 aa)) form the GIY-YIG domain. A UVR domain is found at 198-233 (ADLVRGLARKMEAAAANLEFERAAELRDQLRAVEQV).

Belongs to the UvrC family. As to quaternary structure, interacts with UvrB in an incision complex.

Its subcellular location is the cytoplasm. Functionally, the UvrABC repair system catalyzes the recognition and processing of DNA lesions. UvrC both incises the 5' and 3' sides of the lesion. The N-terminal half is responsible for the 3' incision and the C-terminal half is responsible for the 5' incision. This chain is UvrABC system protein C, found in Desulforudis audaxviator (strain MP104C).